The sequence spans 244 residues: Ribonuclease PH (244 aa).

Phosphate contacts are provided by residues Arg86 and 124–126; that span reads GTR.

Belongs to the RNase PH family. In terms of assembly, homohexameric ring arranged as a trimer of dimers.

The enzyme catalyses tRNA(n+1) + phosphate = tRNA(n) + a ribonucleoside 5'-diphosphate. Functionally, phosphorolytic 3'-5' exoribonuclease that plays an important role in tRNA 3'-end maturation. Removes nucleotide residues following the 3'-CCA terminus of tRNAs; can also add nucleotides to the ends of RNA molecules by using nucleoside diphosphates as substrates, but this may not be physiologically important. Probably plays a role in initiation of 16S rRNA degradation (leading to ribosome degradation) during starvation. The polypeptide is Ribonuclease PH (Glaesserella parasuis serovar 5 (strain SH0165) (Haemophilus parasuis)).